The following is a 429-amino-acid chain: 3-phosphoshikimate 1-carboxyvinyltransferase (429 aa).

The 3-phosphoshikimate site is built by Lys23, Ser24, and Arg28. Position 23 (Lys23) interacts with phosphoenolpyruvate. Gly94 and Arg126 together coordinate phosphoenolpyruvate. 3-phosphoshikimate is bound by residues Ser171, Ser172, Gln173, Ser199, Asp316, Asn339, and Lys343. Gln173 lines the phosphoenolpyruvate pocket. Catalysis depends on Asp316, which acts as the Proton acceptor. Phosphoenolpyruvate-binding residues include Arg347, Arg389, and Lys414.

The protein belongs to the EPSP synthase family. In terms of assembly, monomer.

It localises to the cytoplasm. The enzyme catalyses 3-phosphoshikimate + phosphoenolpyruvate = 5-O-(1-carboxyvinyl)-3-phosphoshikimate + phosphate. It functions in the pathway metabolic intermediate biosynthesis; chorismate biosynthesis; chorismate from D-erythrose 4-phosphate and phosphoenolpyruvate: step 6/7. Its function is as follows. Catalyzes the transfer of the enolpyruvyl moiety of phosphoenolpyruvate (PEP) to the 5-hydroxyl of shikimate-3-phosphate (S3P) to produce enolpyruvyl shikimate-3-phosphate and inorganic phosphate. This is 3-phosphoshikimate 1-carboxyvinyltransferase from Idiomarina loihiensis (strain ATCC BAA-735 / DSM 15497 / L2-TR).